Consider the following 158-residue polypeptide: NKG2-F type II integral membrane protein (158 aa).

The segment covering 1-12 (MNKQRGTYSEVS) has biased composition (polar residues). Residues 1 to 30 (MNKQRGTYSEVSLAQDPKRQQRKLKGNKSS) form a disordered region. At 1–74 (MNKQRGTYSE…LPPPERLTAE (74 aa)) the chain is on the cytoplasmic side. Residues 75 to 95 (VLGIICIVLMATVLKTIVLIP) form a helical membrane-spanning segment. The Extracellular portion of the chain corresponds to 96-158 (CIGVLEQNNF…VLQRTLICFL (63 aa)).

As to quaternary structure, can form disulfide-bonded heterodimer with CD94. As to expression, natural killer cells.

Its subcellular location is the membrane. Functionally, may play a role as a receptor for the recognition of MHC class I HLA-E molecules by NK cells. The polypeptide is NKG2-F type II integral membrane protein (KLRC4) (Pan troglodytes (Chimpanzee)).